The primary structure comprises 475 residues: Sulfate adenylyltransferase subunit 1 (475 aa).

Residues Lys25–Arg239 form the tr-type G domain. Residues Gly34–Ser41 form a G1 region. Gly34–Ser41 is a binding site for GTP. The interval Gly92–Asp96 is G2. The segment at Asp113–Gly116 is G3. Residues Asp113–His117 and Asn168–Asp171 contribute to the GTP site. A G4 region spans residues Asn168 to Asp171. The segment at Ser206–Leu208 is G5.

The protein belongs to the TRAFAC class translation factor GTPase superfamily. Classic translation factor GTPase family. CysN/NodQ subfamily. In terms of assembly, heterodimer composed of CysD, the smaller subunit, and CysN.

The catalysed reaction is sulfate + ATP + H(+) = adenosine 5'-phosphosulfate + diphosphate. It participates in sulfur metabolism; hydrogen sulfide biosynthesis; sulfite from sulfate: step 1/3. With CysD forms the ATP sulfurylase (ATPS) that catalyzes the adenylation of sulfate producing adenosine 5'-phosphosulfate (APS) and diphosphate, the first enzymatic step in sulfur assimilation pathway. APS synthesis involves the formation of a high-energy phosphoric-sulfuric acid anhydride bond driven by GTP hydrolysis by CysN coupled to ATP hydrolysis by CysD. The protein is Sulfate adenylyltransferase subunit 1 of Escherichia coli O17:K52:H18 (strain UMN026 / ExPEC).